The following is a 126-amino-acid chain: Large ribosomal subunit protein bL12 (126 aa).

Belongs to the bacterial ribosomal protein bL12 family. As to quaternary structure, homodimer. Part of the ribosomal stalk of the 50S ribosomal subunit. Forms a multimeric L10(L12)X complex, where L10 forms an elongated spine to which 2 to 4 L12 dimers bind in a sequential fashion. Binds GTP-bound translation factors.

Its function is as follows. Forms part of the ribosomal stalk which helps the ribosome interact with GTP-bound translation factors. Is thus essential for accurate translation. The chain is Large ribosomal subunit protein bL12 from Legionella pneumophila (strain Paris).